The following is a 454-amino-acid chain: ABSCISIC ACID-INSENSITIVE 5-like protein 6 (454 aa).

3 positions are modified to phosphoserine: Ser-32, Ser-55, and Ser-126. Thr-169 is subject to Phosphothreonine. Residues 372 to 435 (IERRQKRMIK…KNQLLEPLRQ (64 aa)) form the bZIP domain. Residues 374–393 (RRQKRMIKNRESAARSRARK) form a basic motif region. Residues 400-414 (LEAEIAQLKELNEEL) form a leucine-zipper region.

This sequence belongs to the bZIP family. ABI5 subfamily. DNA-binding heterodimer. Interacts with ABI3 and the AFP proteins AFP1, AFP2, AFP3 and AFP4. In terms of tissue distribution, expressed in roots and flowers.

It localises to the nucleus. In terms of biological role, binds to the ABA-responsive element (ABRE). Mediates stress-responsive ABA signaling. This Arabidopsis thaliana (Mouse-ear cress) protein is ABSCISIC ACID-INSENSITIVE 5-like protein 6 (ABF3).